Here is a 292-residue protein sequence, read N- to C-terminus: uncharacterized protein (292 aa).

The helical transmembrane segment at 13 to 35 (LFILFIIVVCIYLLPRVAINAFY) threads the bilayer.

This sequence belongs to the serine esterase family.

It is found in the membrane. This is an uncharacterized protein from Salmonella typhi.